Here is a 54-residue protein sequence, read N- to C-terminus: UPF0391 membrane protein Bpet1858 (54 aa).

The next 2 membrane-spanning stretches (helical) occupy residues 5-25 (AVVF…GIAA) and 27-47 (AAGI…LSIL).

The protein belongs to the UPF0391 family.

Its subcellular location is the cell membrane. The protein is UPF0391 membrane protein Bpet1858 of Bordetella petrii (strain ATCC BAA-461 / DSM 12804 / CCUG 43448).